A 910-amino-acid chain; its full sequence is MSLPLTEEQRKKIEENRQKALARRAEKLWAEQPQSTASGSSAARPSQCKQNSLLNLPAEPSKPEGHATISKGQNLNNSLPAAQRPHSSPCFQPSTAEEAKGLWKSEGKMSAACPNPSPPEVSNQQLLGSKSSEGHPQATQDTAASCPRPFPRDPKLEAKAGRPSTSGQSISDTFYALGEKTPKTDGRPAKALQTSPQKASCLRGMCLRTGDRFRVKIGYNKELIEVFKSLPSRRYDSFTKTWDFSMSDYRALMKAVERLSTVSLQPLEEVDGTGGQTSLPSAPSLTFVTGRCMLISRARFEVDIGYSEVVIALFKQMESRNYDPKTRKWNFLLEEHNKLIARSRELKQVQLDPLPKTLTLAFASQLEKTSLQSKADVPEADLSGVDAKLVSNLMPFQREGVSFAISKRGRLLLADDMGLGKTIQAICIAAFYRKEWPLLVVVPSSVRFTWEQAFLRWLPSLSPEDINVVVTGKGRLTAGLVNIVSFDLLSKLEKQLKTPFKVVIIDESHFLKNIKTARCRAAVPILKVAKRVILLSGTPAMSRPAELYTQIIAVKPTFFPQFHAFGLRYCDAKRLPWGWDYSGSSNLGELKLLLEEAVMLRRLKSDVLSQLPAKQRKMVVVNPGRISTRAKAALDAAAKEMTKDKTKQQQKEALLVFFNRTAEAKIPCVIEYILDLLESGREKFLVFAHHKVLLDAIAKELERKNVQHIRIDGSTPSADREDLCQQFQLSKGHTVAVLSITAANMGLTFSSADLVVFAELFWNPGVLIQAEDRVHRIGQTNSVGIHYLVAKGTADDYLWPLIQEKIKVLGEAGLSETNFSEMTEATDYLYKDPKQKTIYSLFQQSFEDDGNDMEFLEAAESFELGSTSGTSGNSSQELGDITDENALADSPPKKRRFEFFDNWDSFTSPF.

The interval 1-170 (MSLPLTEEQR…GRPSTSGQSI (170 aa)) is disordered. Ser2 carries the N-acetylserine modification. 2 mediates interaction with RPA2 regions span residues 2–30 (SLPLTEEQRKKIEENRQKALARRAEKLWA) and 5–30 (LTEEQRKKIEENRQKALARRAEKLWA). Residues 3–28 (LPLTEEQRKKIEENRQKALARRAEKL) adopt a coiled-coil conformation. Over residues 7–29 (EEQRKKIEENRQKALARRAEKLW) the composition is skewed to basic and acidic residues. Composition is skewed to polar residues over residues 32–54 (QPQSTASGSSAARPSQCKQNSLL) and 70–95 (SKGQNLNNSLPAAQRPHSSPCFQPST). Basic and acidic residues predominate over residues 97–107 (EEAKGLWKSEG). A Phosphoserine modification is found at Ser117. Residues 120–131 (EVSNQQLLGSKS) show a composition bias toward polar residues. The segment covering 150 to 160 (FPRDPKLEAKA) has biased composition (basic and acidic residues). The residue at position 164 (Ser164) is a Phosphoserine. HARP domains follow at residues 198–268 (KASC…QPLE) and 284–355 (SLTF…DPLP). The Helicase ATP-binding domain occupies 402 to 557 (SFAISKRGRL…YTQIIAVKPT (156 aa)). 415–422 (DDMGLGKT) is an ATP binding site. Positions 506–509 (DESH) match the DESH box motif. The short motif at 601–618 (RRLKSDVLSQLPAKQRKM) is the Nuclear localization signal element. The Helicase C-terminal domain maps to 672-825 (YILDLLESGR…ETNFSEMTEA (154 aa)). Low complexity predominate over residues 865-875 (GSTSGTSGNSS). The tract at residues 865–890 (GSTSGTSGNSSQELGDITDENALADS) is disordered.

Belongs to the SNF2/RAD54 helicase family. SMARCAL1 subfamily. In terms of assembly, interacts with RPA2; the interaction is direct and mediates the recruitment by the RPA complex of SMARCAL1 to sites of DNA damage. In terms of processing, DNA damage-regulated phosphorylation by kinases that may include ATM, ATR and PRKDC.

The protein resides in the nucleus. The catalysed reaction is ATP + H2O = ADP + phosphate + H(+). Functionally, ATP-dependent annealing helicase that binds selectively to fork DNA relative to ssDNA or dsDNA and catalyzes the rewinding of the stably unwound DNA. Rewinds single-stranded DNA bubbles that are stably bound by replication protein A (RPA). Acts throughout the genome to reanneal stably unwound DNA, performing the opposite reaction of many enzymes, such as helicases and polymerases, that unwind DNA. May play an important role in DNA damage response by acting at stalled replication forks. This chain is SWI/SNF-related matrix-associated actin-dependent regulator of chromatin subfamily A-like protein 1 (Smarcal1), found in Rattus norvegicus (Rat).